The sequence spans 425 residues: Serine--tRNA ligase (425 aa).

Thr231–Glu233 serves as a coordination point for L-serine. Arg262–Glu264 is an ATP binding site. Glu285 is an L-serine binding site. Glu349–Ser352 serves as a coordination point for ATP. Residue Ser385 coordinates L-serine.

Belongs to the class-II aminoacyl-tRNA synthetase family. Type-1 seryl-tRNA synthetase subfamily. Homodimer. The tRNA molecule binds across the dimer.

It is found in the cytoplasm. The catalysed reaction is tRNA(Ser) + L-serine + ATP = L-seryl-tRNA(Ser) + AMP + diphosphate + H(+). It carries out the reaction tRNA(Sec) + L-serine + ATP = L-seryl-tRNA(Sec) + AMP + diphosphate + H(+). Its pathway is aminoacyl-tRNA biosynthesis; selenocysteinyl-tRNA(Sec) biosynthesis; L-seryl-tRNA(Sec) from L-serine and tRNA(Sec): step 1/1. Functionally, catalyzes the attachment of serine to tRNA(Ser). Is also able to aminoacylate tRNA(Sec) with serine, to form the misacylated tRNA L-seryl-tRNA(Sec), which will be further converted into selenocysteinyl-tRNA(Sec). The sequence is that of Serine--tRNA ligase from Bartonella bacilliformis (strain ATCC 35685 / KC583 / Herrer 020/F12,63).